Reading from the N-terminus, the 261-residue chain is uncharacterized protein (261 aa).

Positions 1–22 are disordered; the sequence is MGVADNEYISVPTGEPVQQQPQ. 3 helical membrane-spanning segments follow: residues 92 to 112, 122 to 142, and 147 to 167; these read IIILFFSQQFLLFSIAPILGL, IVVMHFLTAAFYYIFSVIFLF, and INTILLSILFSIIFTLSLMNY.

It is found in the membrane. This is an uncharacterized protein from Dictyostelium discoideum (Social amoeba).